The sequence spans 358 residues: Isopentenyl-diphosphate delta-isomerase (358 aa).

12–13 (RK) serves as a coordination point for substrate. Residues 69–71 (AMT), serine 99, and asparagine 128 contribute to the FMN site. Glutamine 158 is a substrate binding site. Glutamate 159 is a Mg(2+) binding site. Residues lysine 190, threonine 220, 267 to 269 (GIR), and 288 to 289 (AG) contribute to the FMN site.

It belongs to the IPP isomerase type 2 family. As to quaternary structure, homooctamer. Dimer of tetramers. Requires FMN as cofactor. It depends on NADPH as a cofactor. Mg(2+) serves as cofactor.

It is found in the cytoplasm. It carries out the reaction isopentenyl diphosphate = dimethylallyl diphosphate. Involved in the biosynthesis of isoprenoids. Catalyzes the 1,3-allylic rearrangement of the homoallylic substrate isopentenyl (IPP) to its allylic isomer, dimethylallyl diphosphate (DMAPP). The polypeptide is Isopentenyl-diphosphate delta-isomerase (Listeria monocytogenes serotype 4b (strain F2365)).